Reading from the N-terminus, the 131-residue chain is Peptidyl-prolyl cis-trans isomerase NIMA-interacting 4 (131 aa).

The interval 1–25 (MPPKGKSGSGKGGKGGAASGSDSAD) is necessary for nuclear localization and DNA-binding. Positions 1-39 (MPPKGKSGSGKGGKGGAASGSDSADKKSQGPKGGGNAVK) are disordered. Residues 1–41 (MPPKGKSGSGKGGKGGAASGSDSADKKSQGPKGGGNAVKVR) are necessary for association with the pre-rRNP complexes. Residues 7 to 18 (SGSGKGGKGGAA) show a composition bias toward gly residues. The residue at position 19 (Ser-19) is a Phosphoserine; by CK2. Residues 35–129 (GNAVKVRHIL…FGYHIIMVEG (95 aa)) form the PpiC domain.

Belongs to the PpiC/parvulin rotamase family. PIN4 subfamily. In terms of assembly, found in pre-ribosomal ribonucleoprotein (pre-rRNP) complexes. Post-translationally, phosphorylated. Phosphorylation occurs both in the nucleus and the cytoplasm. Phosphorylation at Ser-19 does not affect its PPIase activity but is required for nuclear localization, and the dephosphorylation is a prerequisite for the binding to DNA. The unphosphorylated form associates with the pre-rRNP complexes in the nucleus.

The protein localises to the nucleus. It localises to the nucleolus. The protein resides in the cytoplasm. Its subcellular location is the cytoskeleton. It is found in the spindle. It catalyses the reaction [protein]-peptidylproline (omega=180) = [protein]-peptidylproline (omega=0). Functionally, involved as a ribosomal RNA processing factor in ribosome biogenesis. Binds to tightly bent AT-rich stretches of double-stranded DNA. In Mus musculus (Mouse), this protein is Peptidyl-prolyl cis-trans isomerase NIMA-interacting 4 (Pin4).